The primary structure comprises 319 residues: MVVLVDTVSSTPVRPRHPEKAARPDSLSPKKPDWIRVRAPTTRGYGETRSIVKENGLVTVCEEAGCPNIGECWDKKHATFMIMGDTCTRACAFCNVKTGLPGALDPNEPAYVAEATRKLGLEHLVITSVDRDDLADGGAAHFAATIRAVREHCPTTTIEILTPDFLRKDGALDVVVAAKPDVFNHNLETVPSRYLSVRPGARYFHSIRLLQRVKELDPTIFTKSGIMVGLGEERHEVLQVMDDLRSAEVDFLTIGQYLQPTRKHHAVMRYVTPDEFGGYGKTAYAKGFLMVSASPMTRSSHHAGDDFAKLRAARAALSR.

The disordered stretch occupies residues 1 to 32 (MVVLVDTVSSTPVRPRHPEKAARPDSLSPKKP). Positions 16–32 (RHPEKAARPDSLSPKKP) are enriched in basic and acidic residues. [4Fe-4S] cluster is bound by residues C61, C66, C72, C87, C91, C94, and S300. A Radical SAM core domain is found at 73 to 289 (WDKKHATFMI…GKTAYAKGFL (217 aa)).

The protein belongs to the radical SAM superfamily. Lipoyl synthase family. It depends on [4Fe-4S] cluster as a cofactor.

The protein resides in the cytoplasm. It carries out the reaction [[Fe-S] cluster scaffold protein carrying a second [4Fe-4S](2+) cluster] + N(6)-octanoyl-L-lysyl-[protein] + 2 oxidized [2Fe-2S]-[ferredoxin] + 2 S-adenosyl-L-methionine + 4 H(+) = [[Fe-S] cluster scaffold protein] + N(6)-[(R)-dihydrolipoyl]-L-lysyl-[protein] + 4 Fe(3+) + 2 hydrogen sulfide + 2 5'-deoxyadenosine + 2 L-methionine + 2 reduced [2Fe-2S]-[ferredoxin]. The protein operates within protein modification; protein lipoylation via endogenous pathway; protein N(6)-(lipoyl)lysine from octanoyl-[acyl-carrier-protein]: step 2/2. Catalyzes the radical-mediated insertion of two sulfur atoms into the C-6 and C-8 positions of the octanoyl moiety bound to the lipoyl domains of lipoate-dependent enzymes, thereby converting the octanoylated domains into lipoylated derivatives. The protein is Lipoyl synthase of Rhodopseudomonas palustris (strain BisB5).